We begin with the raw amino-acid sequence, 273 residues long: Dermonecrotic toxin LafSicTox-betaIE1 (273 aa).

Residue histidine 5 is part of the active site. The Mg(2+) site is built by glutamate 25 and aspartate 27. Histidine 41 acts as the Nucleophile in catalysis. 2 disulfide bridges follow: cysteine 45–cysteine 51 and cysteine 47–cysteine 189. Aspartate 85 contacts Mg(2+). The N-linked (GlcNAc...) asparagine glycan is linked to asparagine 250.

The protein belongs to the arthropod phospholipase D family. Class II subfamily. The cofactor is Mg(2+). As to expression, expressed by the venom gland.

The protein resides in the secreted. The catalysed reaction is an N-(acyl)-sphingosylphosphocholine = an N-(acyl)-sphingosyl-1,3-cyclic phosphate + choline. The enzyme catalyses an N-(acyl)-sphingosylphosphoethanolamine = an N-(acyl)-sphingosyl-1,3-cyclic phosphate + ethanolamine. It catalyses the reaction a 1-acyl-sn-glycero-3-phosphocholine = a 1-acyl-sn-glycero-2,3-cyclic phosphate + choline. It carries out the reaction a 1-acyl-sn-glycero-3-phosphoethanolamine = a 1-acyl-sn-glycero-2,3-cyclic phosphate + ethanolamine. In terms of biological role, dermonecrotic toxins cleave the phosphodiester linkage between the phosphate and headgroup of certain phospholipids (sphingolipid and lysolipid substrates), forming an alcohol (often choline) and a cyclic phosphate. This toxin acts on sphingomyelin (SM). It may also act on ceramide phosphoethanolamine (CPE), lysophosphatidylcholine (LPC) and lysophosphatidylethanolamine (LPE), but not on lysophosphatidylserine (LPS), and lysophosphatidylglycerol (LPG). It acts by transphosphatidylation, releasing exclusively cyclic phosphate products as second products. Induces dermonecrosis, hemolysis, increased vascular permeability, edema, inflammatory response, and platelet aggregation. This is Dermonecrotic toxin LafSicTox-betaIE1 from Loxosceles aff. spinulosa (strain GJB-2008) (Recluse spider).